A 246-amino-acid polypeptide reads, in one-letter code: MSQVTMRDMLKAGVHFGHQTRYWNPKMDKYIFGARNKIHIINLEKTLPMFNDALRFVEKLAAGKNKILFVGTKRSAGKIVREEAARCGSPYVDHRWLGGMLTNYKTIRASIKRLRELEAQSQDGTFEKLTKKEALMRTRDLEKLERSLGGIKDMGGLPDAMFVIDVDHERIAISEANKLGIPVIGVVDTNSSPEGVDYIIPGNDDAIRAVQLYLGSMADAVLRGRQNGAGGADEFVEEVASEAAQG.

This sequence belongs to the universal ribosomal protein uS2 family.

The chain is Small ribosomal subunit protein uS2 from Stutzerimonas stutzeri (strain A1501) (Pseudomonas stutzeri).